The sequence spans 411 residues: Na(+)-translocating NADH-quinone reductase subunit F (411 aa).

Residues 5 to 25 traverse the membrane as a helical segment; that stretch reads VILALGIAAFTVIVLVLVAII. The 95-residue stretch at 36–130 folds into the 2Fe-2S ferredoxin-type domain; the sequence is GDITIDINDD…NMEVELPEEI (95 aa). Positions 73, 79, 82, and 114 each coordinate [2Fe-2S] cluster. The 141-residue stretch at 133–273 folds into the FAD-binding FR-type domain; the sequence is VKKWECTVIS…SGPFGEFFAK (141 aa).

This sequence belongs to the NqrF family. In terms of assembly, composed of six subunits; NqrA, NqrB, NqrC, NqrD, NqrE and NqrF. [2Fe-2S] cluster is required as a cofactor. Requires FAD as cofactor.

Its subcellular location is the cell inner membrane. The enzyme catalyses a ubiquinone + n Na(+)(in) + NADH + H(+) = a ubiquinol + n Na(+)(out) + NAD(+). In terms of biological role, NQR complex catalyzes the reduction of ubiquinone-1 to ubiquinol by two successive reactions, coupled with the transport of Na(+) ions from the cytoplasm to the periplasm. The first step is catalyzed by NqrF, which accepts electrons from NADH and reduces ubiquinone-1 to ubisemiquinone by a one-electron transfer pathway. The polypeptide is Na(+)-translocating NADH-quinone reductase subunit F (Haemophilus influenzae (strain PittGG)).